Here is a 538-residue protein sequence, read N- to C-terminus: Inositol phosphate phosphatase IpgD (538 aa).

Cys-439 is an active-site residue. The CX5R motif motif lies at 439–445; sequence CKSGKDR.

This sequence belongs to the phosphatase IpgD/SopB family.

The protein localises to the secreted. The enzyme catalyses a 1,2-diacyl-sn-glycero-3-phospho-(1D-myo-inositol-4,5-bisphosphate) + H2O = a 1,2-diacyl-sn-glycero-3-phospho-(1D-myo-inositol-5-phosphate) + phosphate. In terms of biological role, converts phosphatidylinositol 4,5-bisphosphate (PtdIns 4,5-P2) to PtdIns 5-P. IpgD is injected by Shigella into the host cell and is required for invasion. The accumulation of PtdIns 5-P causes membrane ruffling and actin cytoskeleton rearrangements at the entry site. Acts in concert with IpaA to coordinate and control the membrane and cytoskeletal rearrangements induced early after invasion of the host cell. The polypeptide is Inositol phosphate phosphatase IpgD (ipgD) (Shigella flexneri).